A 238-amino-acid polypeptide reads, in one-letter code: 14-3-3 protein 2 (238 aa).

The protein belongs to the 14-3-3 family.

Its function is as follows. Probable adapter protein. This chain is 14-3-3 protein 2, found in Entamoeba histolytica (strain ATCC 30459 / HM-1:IMSS / ABRM).